The sequence spans 1002 residues: Golgin subfamily A member 2 (1002 aa).

Residues 1 to 11 (MWPQPRLPPRP) are compositionally biased toward pro residues. Residues 1 to 84 (MWPQPRLPPR…AATLQPSDDT (84 aa)) are interaction with p115/USO1. Positions 1–107 (MWPQPRLPPR…TSMAASQNHD (107 aa)) are disordered. Residues 16–892 (ETRQSKLAAA…LELQELVLRL (877 aa)) are a coiled coil. Residues arginine 18, arginine 30, and arginine 35 each carry the dimethylated arginine modification. Positions 26-49 (KKKLREYQQRNSPGVPTGAKKKKK) match the Nuclear localization signal motif. Residue serine 37 is modified to Phosphoserine. Residues 52-63 (NGSNPETTTSGG) are compositionally biased toward polar residues. Serine 66 carries the phosphoserine modification. Over residues 95–105 (ASLTSMAASQN) the composition is skewed to polar residues. A phosphoserine mark is found at serine 273, serine 438, and serine 690. A disordered region spans residues 694–724 (HPGEGDGLDREEEEDEEEEEEEAVAVPQPMP). A compositionally biased stretch (acidic residues) spans 702-716 (DREEEEDEEEEEEEA). Phosphoserine is present on residues serine 937, serine 953, and serine 981. The interaction with GORASP1/GRASP65 stretch occupies residues 992-1002 (DENDEVKITVI).

The protein belongs to the GOLGA2 family. Homodimer, may assemble into homohexamers. Homotetramer; forms a parallel homotetramer with a flexible rod-like structure that can give rise to I- and Y-shaped conformations. Interacts with GORASP1/GRASP65. The homooligomer forms a complex with GORASP1 with a 1:1 stoichiometry. Interacts with RAB1B that has been activated by GTP-binding. Interacts with p115/USO1; interaction with p115/USO1 inhibits interaction with STX5 and/or RAB1B. Interacts with STX5. Interacts with ZFPL1. Interacts with AKAP450/AKAP9; leading to recruit AKAP450/AKAP9 to the cis-Golgi. In terms of processing, cleaved by caspases at the onset of apoptosis. Post-translationally, methylation by PRMT5 is required for Golgi ribbon formation. While dimethylation at Arg-30 and Arg-35 are confirmed in vivo, it is unclear whether Arg-18 is methylated in vivo. Phosphorylated at Ser-37 by CDK1 at the onset of mitosis, inhibiting the interaction with p115/USO1 and triggering Golgi disassembly. Phosphorylated at Ser-37 in prophase as the Golgi complex starts to break down, and remains phosphorylated during further breakdown and partitioning of the Golgi fragments in metaphase and anaphase. In telophase, GM130 is dephosphorylated by PP2A as the Golgi fragments start to reassemble.

Its subcellular location is the golgi apparatus. It is found in the cis-Golgi network membrane. The protein resides in the endoplasmic reticulum-Golgi intermediate compartment membrane. The protein localises to the cytoplasm. It localises to the cytoskeleton. Its subcellular location is the spindle pole. Peripheral membrane component of the cis-Golgi stack that acts as a membrane skeleton that maintains the structure of the Golgi apparatus, and as a vesicle thether that facilitates vesicle fusion to the Golgi membrane. Required for normal protein transport from the endoplasmic reticulum to the Golgi apparatus and the cell membrane. Together with p115/USO1 and STX5, involved in vesicle tethering and fusion at the cis-Golgi membrane to maintain the stacked and inter-connected structure of the Golgi apparatus. Plays a central role in mitotic Golgi disassembly: phosphorylation at Ser-37 by CDK1 at the onset of mitosis inhibits the interaction with p115/USO1, preventing tethering of COPI vesicles and thereby inhibiting transport through the Golgi apparatus during mitosis. Also plays a key role in spindle pole assembly and centrosome organization. Promotes the mitotic spindle pole assembly by activating the spindle assembly factor TPX2 to nucleate microtubules around the Golgi and capture them to couple mitotic membranes to the spindle: upon phosphorylation at the onset of mitosis, GOLGA2 interacts with importin-alpha via the nuclear localization signal region, leading to recruit importin-alpha to the Golgi membranes and liberate the spindle assembly factor TPX2 from importin-alpha. TPX2 then activates AURKA kinase and stimulates local microtubule nucleation. Upon filament assembly, nascent microtubules are further captured by GOLGA2, thus linking Golgi membranes to the spindle. Regulates the meiotic spindle pole assembly, probably via the same mechanism. Also regulates the centrosome organization. Also required for the Golgi ribbon formation and glycosylation of membrane and secretory proteins. The protein is Golgin subfamily A member 2 (GOLGA2) of Homo sapiens (Human).